We begin with the raw amino-acid sequence, 689 residues long: MSEKTFLVEIGTEELPPKALRSLAESFAANFTAELDNAGLAHGTVQWFAAPRRLALKVANLAEAQPDREIEKRGPAIAQAFDAEGKPSKAAEGWARGCGITVDQAERLTTDKGEWLLYRAHVKGESTEALLPNMVATSLAKLPIPKLMRWGASDVHFVRPVHTVTLLLGDKVIPATILGIQSDRVIRGHRFMGEPEFTIDNADQYPEILRERGKVIADYEERKAKIKADAEEAARKIGGNADLSESLLEEVASLVEWPVVLTAKFEEKFLAVPAEALVYTMKGDQKYFPVYANDGKLLPNFIFVANIESKDPQQIISGNEKVVRPRLADAEFFFNTDRKKRLEDNLPRLQTVLFQQQLGTLRDKTDRIQALAGWIAEQIGADVNHATRAGLLSKCDLMTNMVFEFTDTQGVMGMHYARHDGEAEDVAVALNEQYQPRFAGDDLPSNPVACALAIADKMDTLAGIFGIGQHPKGDKDPFALRRAALGVLRIIVEKNLNLDLQTLTEEAVRLYGDKLTNANVVDDVIDFMLGRFRAWYQDEGYTVDTIQAVLARRPTRPADFDARMKAVSHFRTLEAAAALAAANKRVSNILAKSDEVLSDRVNASTLKEPEEIKLAMQVVVLRDKLEPYFAEGRYQDALVELAELREPVDAFFDKVMVMVDDKELRLNRLTMLEKLRELFLRVADISLLQ.

It belongs to the class-II aminoacyl-tRNA synthetase family. As to quaternary structure, tetramer of two alpha and two beta subunits.

Its subcellular location is the cytoplasm. It carries out the reaction tRNA(Gly) + glycine + ATP = glycyl-tRNA(Gly) + AMP + diphosphate. The protein is Glycine--tRNA ligase beta subunit of Shigella flexneri serotype 5b (strain 8401).